The primary structure comprises 399 residues: Acetate kinase (399 aa).

N10 contributes to the Mg(2+) binding site. ATP is bound at residue K17. R91 is a binding site for substrate. Catalysis depends on D148, which acts as the Proton donor/acceptor. ATP-binding positions include H208–G212, D283–R285, and G331–N335. E385 lines the Mg(2+) pocket.

It belongs to the acetokinase family. Homodimer. Mg(2+) is required as a cofactor. Requires Mn(2+) as cofactor.

The protein localises to the cytoplasm. The catalysed reaction is acetate + ATP = acetyl phosphate + ADP. It participates in metabolic intermediate biosynthesis; acetyl-CoA biosynthesis; acetyl-CoA from acetate: step 1/2. Functionally, catalyzes the formation of acetyl phosphate from acetate and ATP. Can also catalyze the reverse reaction. The polypeptide is Acetate kinase (Shewanella amazonensis (strain ATCC BAA-1098 / SB2B)).